Consider the following 976-residue polypeptide: Protein PLASTID MOVEMENT IMPAIRED 1-RELATED 2 (976 aa).

One can recognise a C2 NT-type domain in the interval 81–229 (IAHFGQRRFD…VLNLSFDYSV (149 aa)). Positions 309–319 (KQAADSDDSGK) are enriched in basic and acidic residues. Disordered regions lie at residues 309 to 343 (KQAA…ESSR) and 381 to 419 (NLLP…STEK). The span at 394–414 (STFSSQVISESSESKSPSAMD) shows a compositional bias: low complexity.

In terms of biological role, seems not necessary for chloroplast and nuclear photorelocation movements. The sequence is that of Protein PLASTID MOVEMENT IMPAIRED 1-RELATED 2 from Arabidopsis thaliana (Mouse-ear cress).